The following is a 382-amino-acid chain: Alkanesulfonate monooxygenase (382 aa).

Belongs to the SsuD family.

The enzyme catalyses an alkanesulfonate + FMNH2 + O2 = an aldehyde + FMN + sulfite + H2O + 2 H(+). Functionally, catalyzes the desulfonation of aliphatic sulfonates. The chain is Alkanesulfonate monooxygenase from Pseudomonas putida (strain ATCC 47054 / DSM 6125 / CFBP 8728 / NCIMB 11950 / KT2440).